We begin with the raw amino-acid sequence, 351 residues long: UDP-N-acetylglucosamine--N-acetylmuramyl-(pentapeptide) pyrophosphoryl-undecaprenol N-acetylglucosamine transferase (351 aa).

UDP-N-acetyl-alpha-D-glucosamine-binding positions include 13 to 15 (TGG), asparagine 125, arginine 161, serine 189, isoleucine 241, 260 to 265 (ALTVCE), and glutamine 285.

It belongs to the glycosyltransferase 28 family. MurG subfamily.

The protein localises to the cell inner membrane. It catalyses the reaction di-trans,octa-cis-undecaprenyl diphospho-N-acetyl-alpha-D-muramoyl-L-alanyl-D-glutamyl-meso-2,6-diaminopimeloyl-D-alanyl-D-alanine + UDP-N-acetyl-alpha-D-glucosamine = di-trans,octa-cis-undecaprenyl diphospho-[N-acetyl-alpha-D-glucosaminyl-(1-&gt;4)]-N-acetyl-alpha-D-muramoyl-L-alanyl-D-glutamyl-meso-2,6-diaminopimeloyl-D-alanyl-D-alanine + UDP + H(+). It participates in cell wall biogenesis; peptidoglycan biosynthesis. In terms of biological role, cell wall formation. Catalyzes the transfer of a GlcNAc subunit on undecaprenyl-pyrophosphoryl-MurNAc-pentapeptide (lipid intermediate I) to form undecaprenyl-pyrophosphoryl-MurNAc-(pentapeptide)GlcNAc (lipid intermediate II). The polypeptide is UDP-N-acetylglucosamine--N-acetylmuramyl-(pentapeptide) pyrophosphoryl-undecaprenol N-acetylglucosamine transferase (Haemophilus influenzae (strain ATCC 51907 / DSM 11121 / KW20 / Rd)).